Consider the following 240-residue polypeptide: tRNA (guanine-N(1)-)-methyltransferase (240 aa).

Residues Gly110 and 129–134 (LGDFVL) each bind S-adenosyl-L-methionine.

The protein belongs to the RNA methyltransferase TrmD family. As to quaternary structure, homodimer.

Its subcellular location is the cytoplasm. It carries out the reaction guanosine(37) in tRNA + S-adenosyl-L-methionine = N(1)-methylguanosine(37) in tRNA + S-adenosyl-L-homocysteine + H(+). Specifically methylates guanosine-37 in various tRNAs. The chain is tRNA (guanine-N(1)-)-methyltransferase from Clostridium botulinum (strain Kyoto / Type A2).